Reading from the N-terminus, the 483-residue chain is Probable glycosyltransferase 6 (483 aa).

At 1–40 (MAASETAPFGVSAASKGGGGVAGARAQHGQLAVAGRVHDA) the chain is on the cytoplasmic side. The helical; Signal-anchor for type II membrane protein transmembrane segment at 41-61 (LVFAAGAVAAVLVLLATASFL) threads the bilayer. The Lumenal portion of the chain corresponds to 62-483 (SPMPVTNLVA…PLPFDYPAAR (422 aa)). Residue asparagine 144 is glycosylated (N-linked (GlcNAc...) asparagine).

This sequence belongs to the glycosyltransferase 34 family.

Its subcellular location is the golgi apparatus membrane. Probable glycosyltransferase that may be involved in the biosynthesis of xyloglucan. The polypeptide is Probable glycosyltransferase 6 (Oryza sativa subsp. indica (Rice)).